We begin with the raw amino-acid sequence, 186 residues long: Dynactin subunit 3 (186 aa).

Residue alanine 2 is modified to N-acetylalanine.

Belongs to the dynactin subunit 3 family. Subunit of dynactin, a multiprotein complex part of a tripartite complex with dynein and a adapter, such as BICDL1, BICD2 or HOOK3. The dynactin complex is built around ACTR1A/ACTB filament and consists of an actin-related filament composed of a shoulder domain, a pointed end and a barbed end. Its length is defined by its flexible shoulder domain. The soulder is composed of 2 DCTN1 subunits, 4 DCTN2 and 2 DCTN3. The 4 DCNT2 (via N-terminus) bind the ACTR1A filament and act as molecular rulers to determine the length. The pointed end is important for binding dynein-dynactin cargo adapters. Consists of 4 subunits: ACTR10, DCNT4, DCTN5 and DCTN6. The barbed end is composed of a CAPZA1:CAPZB heterodimers, which binds ACTR1A/ACTB filament and dynactin and stabilizes dynactin.

It localises to the cytoplasm. The protein resides in the cytoskeleton. Its subcellular location is the microtubule organizing center. It is found in the centrosome. The protein localises to the chromosome. It localises to the centromere. The protein resides in the kinetochore. Its subcellular location is the spindle. It is found in the cleavage furrow. The protein localises to the midbody. Functionally, part of the dynactin complex that activates the molecular motor dynein for ultra-processive transport along microtubules. Together with dynein is involved in spindle assembly and cytokinesis. This chain is Dynactin subunit 3, found in Sus scrofa (Pig).